The sequence spans 467 residues: tRNA-2-methylthio-N(6)-dimethylallyladenosine synthase (467 aa).

A disordered region spans residues M1–A20. One can recognise an MTTase N-terminal domain in the interval R23–G143. C32, C68, C106, C184, C188, and C191 together coordinate [4Fe-4S] cluster. A Radical SAM core domain is found at R170–A402. The TRAM domain maps to D405–A467.

This sequence belongs to the methylthiotransferase family. MiaB subfamily. As to quaternary structure, monomer. It depends on [4Fe-4S] cluster as a cofactor.

The protein localises to the cytoplasm. It carries out the reaction N(6)-dimethylallyladenosine(37) in tRNA + (sulfur carrier)-SH + AH2 + 2 S-adenosyl-L-methionine = 2-methylsulfanyl-N(6)-dimethylallyladenosine(37) in tRNA + (sulfur carrier)-H + 5'-deoxyadenosine + L-methionine + A + S-adenosyl-L-homocysteine + 2 H(+). Its function is as follows. Catalyzes the methylthiolation of N6-(dimethylallyl)adenosine (i(6)A), leading to the formation of 2-methylthio-N6-(dimethylallyl)adenosine (ms(2)i(6)A) at position 37 in tRNAs that read codons beginning with uridine. In Brucella canis (strain ATCC 23365 / NCTC 10854 / RM-666), this protein is tRNA-2-methylthio-N(6)-dimethylallyladenosine synthase.